The following is a 191-amino-acid chain: COP9 signalosome complex subunit 8 (191 aa).

One can recognise a PCI domain in the interval 6–179 (MMAELDEKLL…VSLVPNEQQL (174 aa)).

Belongs to the CSN8 family. As to quaternary structure, component of the CSN complex, probably composed of cops1, cops2, cops3, cops4, cops5, cops6, cops7, cops8 and cops9.

Its subcellular location is the cytoplasm. It localises to the nucleus. Functionally, component of the COP9 signalosome complex (CSN), a complex involved in various cellular and developmental processes. The CSN complex is an essential regulator of the ubiquitin (Ubl) conjugation pathway by mediating the deneddylation of the cullin subunits of E3 ligase complexes, leading to modify the Ubl ligase activity. The polypeptide is COP9 signalosome complex subunit 8 (cops8) (Danio rerio (Zebrafish)).